Consider the following 395-residue polypeptide: Probable alcohol dehydrogenase EutG (395 aa).

NAD(+)-binding positions include aspartate 57, 116–120 (GSVLD), 156–160 (TTAGT), lysine 178, and 197–201 (VTEGV). Residues aspartate 212, histidine 216, histidine 281, and histidine 295 each contribute to the Fe cation site. 2 residues coordinate NAD(+): histidine 295 and aspartate 354.

Belongs to the iron-containing alcohol dehydrogenase family. Requires Fe cation as cofactor.

The protein localises to the bacterial microcompartment. The enzyme catalyses ethanol + NAD(+) = acetaldehyde + NADH + H(+). It functions in the pathway amine and polyamine degradation; ethanolamine degradation. Probably acts on the acetaldehyde produced by the degradation of ethanolamine, producing ethanol. In terms of biological role, expression of the eut operon allows this bacteria to use ethanolamine (EA) as a carbon, nitrogen and energy source. It relies on cobalamin (vitamin B12) both as a cofactor for the ethanolamine ammonia-lyase (EAL) activity and to induce the operon. EA enhances bacterial survival in macrophages in a concentration-dependent manner, suggesting it is an important nutrient during infection. The chain is Probable alcohol dehydrogenase EutG from Salmonella typhimurium (strain LT2 / SGSC1412 / ATCC 700720).